Reading from the N-terminus, the 1136-residue chain is MAMDISLFFIFLVIYAPLVSYADESQAEIDALTAFKLNLHDPLGALTSWDPSTPAAPCDWRGVGCTNHRVTEIRLPRLQLSGRISDRISGLRMLRKLSLRSNSFNGTIPTSLAYCTRLLSVFLQYNSLSGKLPPAMRNLTSLEVFNVAGNRLSGEIPVGLPSSLQFLDISSNTFSGQIPSGLANLTQLQLLNLSYNQLTGEIPASLGNLQSLQYLWLDFNLLQGTLPSAISNCSSLVHLSASENEIGGVIPAAYGALPKLEVLSLSNNNFSGTVPFSLFCNTSLTIVQLGFNAFSDIVRPETTANCRTGLQVLDLQENRISGRFPLWLTNILSLKNLDVSGNLFSGEIPPDIGNLKRLEELKLANNSLTGEIPVEIKQCGSLDVLDFEGNSLKGQIPEFLGYMKALKVLSLGRNSFSGYVPSSMVNLQQLERLNLGENNLNGSFPVELMALTSLSELDLSGNRFSGAVPVSISNLSNLSFLNLSGNGFSGEIPASVGNLFKLTALDLSKQNMSGEVPVELSGLPNVQVIALQGNNFSGVVPEGFSSLVSLRYVNLSSNSFSGEIPQTFGFLRLLVSLSLSDNHISGSIPPEIGNCSALEVLELRSNRLMGHIPADLSRLPRLKVLDLGQNNLSGEIPPEISQSSSLNSLSLDHNHLSGVIPGSFSGLSNLTKMDLSVNNLTGEIPASLALISSNLVYFNVSSNNLKGEIPASLGSRINNTSEFSGNTELCGKPLNRRCESSTAEGKKKKRKMILMIVMAAIGAFLLSLFCCFYVYTLLKWRKKLKQQSTTGEKKRSPGRTSAGSRVRSSTSRSSTENGEPKLVMFNNKITLAETIEATRQFDEENVLSRTRYGLLFKANYNDGMVLSIRRLPNGSLLNENLFKKEAEVLGKVKHRNITVLRGYYAGPPDLRLLVYDYMPNGNLSTLLQEASHQDGHVLNWPMRHLIALGIARGLGFLHQSNMVHGDIKPQNVLFDADFEAHISDFGLDRLTIRSPSRSAVTANTIGTLGYVSPEATLSGEITRESDIYSFGIVLLEILTGKRPVMFTQDEDIVKWVKKQLQRGQVTELLEPGLLELDPESSEWEEFLLGIKVGLLCTATDPLDRPTMSDVVFMLEGCRVGPDVPSSADPTSQPSPA.

A signal peptide spans 1-22 (MAMDISLFFIFLVIYAPLVSYA). Topologically, residues 23 to 751 (DESQAEIDAL…TAEGKKKKRK (729 aa)) are extracellular. LRR repeat units follow at residues 93 to 115 (MLRKLSLRSNSFNGTIPTSLAYC), 117 to 139 (RLLSVFLQYNSLSGKLPPAMRNL), 141 to 162 (SLEVFNVAGNRLSGEIPVGLPS), 163 to 186 (SLQFLDISSNTFSGQIPSGLANLT), 187 to 210 (QLQLLNLSYNQLTGEIPASLGNLQ), 211 to 233 (SLQYLWLDFNLLQGTLPSAISNC), 235 to 256 (SLVHLSASENEIGGVIPAAYGA), and 259 to 280 (KLEVLSLSNNNFSGTVPFSLFC). Asparagine 105 and asparagine 138 each carry an N-linked (GlcNAc...) asparagine glycan. N-linked (GlcNAc...) asparagine glycans are attached at residues asparagine 184, asparagine 192, and asparagine 232. Asparagine 269 and asparagine 281 each carry an N-linked (GlcNAc...) asparagine glycan. LRR repeat units follow at residues 283–304 (SLTIVQLGFNAFSDIVRPETTA), 309–330 (GLQVLDLQENRISGRFPLWLTN), 333–355 (SLKNLDVSGNLFSGEIPPDIGNL), 357–379 (RLEELKLANNSLTGEIPVEIKQC), 381–403 (SLDVLDFEGNSLKGQIPEFLGYM), 405–426 (ALKVLSLGRNSFSGYVPSSMVN), 429–452 (QLERLNLGENNLNGSFPVELMALT), 453–479 (SLSELDLSGNRFSGAVPVSISNLSNLS), 480–500 (FLNLSGNGFSGEIPASVGNLF), 501–524 (KLTALDLSKQNMSGEVPVELSGLP), 525–546 (NVQVIALQGNNFSGVVPEGFSS), 549–571 (SLRYVNLSSNSFSGEIPQTFGFL), 573–595 (LLVSLSLSDNHISGSIPPEIGNC), 597–620 (ALEVLELRSNRLMGHIPADLSRLP), 621–643 (RLKVLDLGQNNLSGEIPPEISQS), 645–666 (SLNSLSLDHNHLSGVIPGSFSG), 669–691 (NLTKMDLSVNNLTGEIPASLALI), and 694–716 (NLVYFNVSSNNLKGEIPASLGSR). An N-linked (GlcNAc...) asparagine glycan is attached at asparagine 365. Residues asparagine 441, asparagine 474, asparagine 477, asparagine 482, asparagine 511, asparagine 535, asparagine 554, and asparagine 594 are each glycosylated (N-linked (GlcNAc...) asparagine). An N-linked (GlcNAc...) asparagine glycan is attached at asparagine 631. N-linked (GlcNAc...) asparagine glycosylation is found at asparagine 669, asparagine 679, asparagine 699, and asparagine 719. A helical transmembrane segment spans residues 752-772 (MILMIVMAAIGAFLLSLFCCF). The Cytoplasmic portion of the chain corresponds to 773–1136 (YVYTLLKWRK…ADPTSQPSPA (364 aa)). Positions 786-819 (QQSTTGEKKRSPGRTSAGSRVRSSTSRSSTENGE) are disordered. Residues 799–815 (RTSAGSRVRSSTSRSST) are compositionally biased toward low complexity. Phosphothreonine occurs at positions 830 and 838. The region spanning 841–1123 (FDEENVLSRT…LEGCRVGPDV (283 aa)) is the Protein kinase domain. Phosphotyrosine is present on residues tyrosine 915 and tyrosine 1010.

Belongs to the protein kinase superfamily. Ser/Thr protein kinase family.

Its subcellular location is the cell membrane. The catalysed reaction is L-seryl-[protein] + ATP = O-phospho-L-seryl-[protein] + ADP + H(+). It carries out the reaction L-threonyl-[protein] + ATP = O-phospho-L-threonyl-[protein] + ADP + H(+). The polypeptide is Probable LRR receptor-like serine/threonine-protein kinase At4g36180 (Arabidopsis thaliana (Mouse-ear cress)).